A 607-amino-acid polypeptide reads, in one-letter code: CUB and zona pellucida-like domain-containing protein 1 (607 aa).

An N-terminal signal peptide occupies residues 1–24; the sequence is MELVRRLMPLTLLILSCLAELTMA. Cys-17 and Cys-58 form a disulfide bridge. CUB domains are found at residues 25–146 and 154–265; these read EAEG…YFFS and CGGY…YTSI. Over 25–568 the chain is Lumenal; it reads EAEGNASCTV…EETPNQPFNS (544 aa). N-linked (GlcNAc...) asparagine glycosylation is found at Asn-29, Asn-57, and Asn-67. Intrachain disulfides connect Cys-85-Cys-107, Cys-154-Cys-180, and Cys-207-Cys-229. The ZP domain occupies 276–519; that stretch reads TCSSDRMRVI…SRCNQGCVSR (244 aa). N-linked (GlcNAc...) asparagine glycans are attached at residues Asn-394 and Asn-419. A disulfide bridge links Cys-442 with Cys-498. A helical membrane pass occupies residues 569–589; it reads VHLFSFMVLALNVVTVATITV. The Cytoplasmic segment spans residues 590–607; sequence RHFVNQRADYKYQKLQNY.

As to expression, detected in pancreas and epithelium of ovary. Expressed at higher levels in ovarian tumors than in normal tissue.

The protein localises to the zymogen granule membrane. Localized to zymogen granules, where it functions in trypsinogen activation. May indirectly regulate cell motility, cell-cell and cell/extracellular matrix interactions. The chain is CUB and zona pellucida-like domain-containing protein 1 from Homo sapiens (Human).